A 156-amino-acid polypeptide reads, in one-letter code: MSRKNRAPKREVLPDPLYNSKLVTRLINRVMLDGKRGTATSIVYGAFEQIKEATGTDALEVFETAMENIMPVLEVRARRVGGSNYQVPVEVRPERRTTLGLRWLVTIARLRGEHTMQDRLAKEIMDAANNTGAAVKKREDTHRMAEANRAFAHFRW.

It belongs to the universal ribosomal protein uS7 family. In terms of assembly, part of the 30S ribosomal subunit. Contacts proteins S9 and S11.

Its function is as follows. One of the primary rRNA binding proteins, it binds directly to 16S rRNA where it nucleates assembly of the head domain of the 30S subunit. Is located at the subunit interface close to the decoding center, probably blocks exit of the E-site tRNA. This is Small ribosomal subunit protein uS7 from Streptococcus gordonii (strain Challis / ATCC 35105 / BCRC 15272 / CH1 / DL1 / V288).